A 63-amino-acid chain; its full sequence is Large ribosomal subunit protein uL30 (63 aa).

It belongs to the universal ribosomal protein uL30 family. In terms of assembly, part of the 50S ribosomal subunit.

The protein is Large ribosomal subunit protein uL30 of Rickettsia africae (strain ESF-5).